The sequence spans 259 residues: Dickkopf-related protein 2 (259 aa).

The N-terminal stretch at 1 to 33 is a signal peptide; sequence MAALMRVKDSSRCLLLLAAVLMVESSQLGSSRA. The segment at 42-70 is disordered; the sequence is LGGETPAQSANRSAGMNQGLAFGGSKKGK. A compositionally biased stretch (polar residues) spans 47–57; it reads PAQSANRSAGM. The N-linked (GlcNAc...) asparagine glycan is linked to N52. The DKK-type Cys-1 stretch occupies residues 78–127; it reads CSSDKECEVGRYCHSPHQGSSACMLCRRKKKRCHRDGMCCPGTRCNNGIC. 5 cysteine pairs are disulfide-bonded: C183–C195, C189–C204, C194–C231, C214–C239, and C233–C256. Positions 183-256 are DKK-type Cys-2; that stretch reads CLRSSDCIDG…YSSKARLHVC (74 aa).

It belongs to the dickkopf family. In terms of assembly, interacts with LRP5 and LRP6. Post-translationally, may be proteolytically processed by a furin-like protease.

It localises to the secreted. In terms of biological role, antagonizes canonical Wnt signaling by inhibiting LRP5/6 interaction with Wnt and by forming a ternary complex with the transmembrane protein KREMEN that promotes internalization of LRP5/6. DKKs play an important role in vertebrate development, where they locally inhibit Wnt regulated processes such as antero-posterior axial patterning, limb development, somitogenesis and eye formation. In the adult, Dkks are implicated in bone formation and bone disease, cancer and Alzheimer disease. The protein is Dickkopf-related protein 2 of Mus musculus (Mouse).